The sequence spans 199 residues: Cytochrome c oxidase subunit 2 (199 aa).

Residues 1 to 13 (AICSLVLYLLTLM) form a helical membrane-spanning segment. Residues 14-26 (LMEKLSSNTVDAQ) are Mitochondrial matrix-facing. The helical transmembrane segment at 27–54 (EVELIWTILPAIVLILLALPSLQILYMM) threads the bilayer. Residues 55–199 (DEIDEPDLTL…SSLLSASSSL (145 aa)) are Mitochondrial intermembrane-facing. The Cu cation site is built by H128, C163, E165, C167, H171, and M174. E165 provides a ligand contact to Mg(2+).

It belongs to the cytochrome c oxidase subunit 2 family. As to quaternary structure, component of the cytochrome c oxidase (complex IV, CIV), a multisubunit enzyme composed of 14 subunits. The complex is composed of a catalytic core of 3 subunits MT-CO1, MT-CO2 and MT-CO3, encoded in the mitochondrial DNA, and 11 supernumerary subunits COX4I, COX5A, COX5B, COX6A, COX6B, COX6C, COX7A, COX7B, COX7C, COX8 and NDUFA4, which are encoded in the nuclear genome. The complex exists as a monomer or a dimer and forms supercomplexes (SCs) in the inner mitochondrial membrane with NADH-ubiquinone oxidoreductase (complex I, CI) and ubiquinol-cytochrome c oxidoreductase (cytochrome b-c1 complex, complex III, CIII), resulting in different assemblies (supercomplex SCI(1)III(2)IV(1) and megacomplex MCI(2)III(2)IV(2)). Found in a complex with TMEM177, COA6, COX18, COX20, SCO1 and SCO2. Interacts with TMEM177 in a COX20-dependent manner. Interacts with COX20. Interacts with COX16. Cu cation is required as a cofactor.

It localises to the mitochondrion inner membrane. It catalyses the reaction 4 Fe(II)-[cytochrome c] + O2 + 8 H(+)(in) = 4 Fe(III)-[cytochrome c] + 2 H2O + 4 H(+)(out). Component of the cytochrome c oxidase, the last enzyme in the mitochondrial electron transport chain which drives oxidative phosphorylation. The respiratory chain contains 3 multisubunit complexes succinate dehydrogenase (complex II, CII), ubiquinol-cytochrome c oxidoreductase (cytochrome b-c1 complex, complex III, CIII) and cytochrome c oxidase (complex IV, CIV), that cooperate to transfer electrons derived from NADH and succinate to molecular oxygen, creating an electrochemical gradient over the inner membrane that drives transmembrane transport and the ATP synthase. Cytochrome c oxidase is the component of the respiratory chain that catalyzes the reduction of oxygen to water. Electrons originating from reduced cytochrome c in the intermembrane space (IMS) are transferred via the dinuclear copper A center (CU(A)) of subunit 2 and heme A of subunit 1 to the active site in subunit 1, a binuclear center (BNC) formed by heme A3 and copper B (CU(B)). The BNC reduces molecular oxygen to 2 water molecules using 4 electrons from cytochrome c in the IMS and 4 protons from the mitochondrial matrix. This chain is Cytochrome c oxidase subunit 2 (MT-CO2), found in Dromaius novaehollandiae (Emu).